The chain runs to 221 residues: UPF0502 protein Sputw3181_2381 (221 aa).

This sequence belongs to the UPF0502 family.

This is UPF0502 protein Sputw3181_2381 from Shewanella sp. (strain W3-18-1).